The chain runs to 860 residues: Rod cGMP-specific 3',5'-cyclic phosphodiesterase subunit alpha (860 aa).

An N-acetylglycine modification is found at Gly2. 2 consecutive GAF domains span residues 73–222 (QTEK…NLIM) and 254–431 (DIER…GWSV). A PDEase domain is found at 483 to 816 (EEEELAEILQ…KEWKALADEY (334 aa)). His559 acts as the Proton donor in catalysis. 4 residues coordinate a divalent metal cation: His563, His599, Asp600, and Asp720. The disordered stretch occupies residues 821–860 (KVQEEKKQKQQSAKSAAAGNQPGGNPSPGGATTSKSCCIQ). Over residues 830–851 (QQSAKSAAAGNQPGGNPSPGGA) the composition is skewed to low complexity. Cysteine methyl ester is present on Cys857. The S-farnesyl cysteine moiety is linked to residue Cys857. Positions 858–860 (CIQ) are cleaved as a propeptide — removed in mature form.

This sequence belongs to the cyclic nucleotide phosphodiesterase family. In terms of assembly, oligomer composed of two catalytic chains (alpha and beta), an inhibitory chain (gamma) and the delta chain. A divalent metal cation serves as cofactor.

The protein resides in the cell membrane. The protein localises to the cell projection. It localises to the cilium. It is found in the photoreceptor outer segment. It catalyses the reaction 3',5'-cyclic GMP + H2O = GMP + H(+). In terms of biological role, rod-specific cGMP phosphodiesterase that catalyzes the hydrolysis of 3',5'-cyclic GMP. This protein participates in processes of transmission and amplification of the visual signal. The protein is Rod cGMP-specific 3',5'-cyclic phosphodiesterase subunit alpha of Homo sapiens (Human).